The primary structure comprises 978 residues: Copper-transporting ATPase HMA4 (978 aa).

Over residues 1-11 (MEQNGENHLKD) the composition is skewed to basic and acidic residues. The segment at 1–35 (MEQNGENHLKDPLLQADGGGSGASPAGASPRKERK) is disordered. HMA domains follow at residues 37–103 (RKVM…FEVD), 111–177 (AVCR…FGAD), and 186–252 (NKVH…QPPK). Positions 48, 51, 122, and 125 each coordinate Cu(+). 8 helical membrane-spanning segments follow: residues 280–300 (FLWSCLFSVPVFMFSMVLPMI), 315–335 (MTIGMLLRWLLCSPVQFIIGW), 352–372 (MDVLVALGTNAAYFYSVYIVL), 385–405 (FFETSAMLISFILLGKYLEVV), 545–565 (FFVPTVVVAAFLTWLGWFVAG), 584–604 (LALQFGISVLVVACPCALGLA), 907–927 (VWALGYNVLGMPVAAGVLFPF), and 935–955 (WLAGACMAASSVSVVCSSLLL).

The protein belongs to the cation transport ATPase (P-type) (TC 3.A.3) family. Type IB subfamily. Highly expressed in roots. Expressed in vascular tissues of the stele, mainly in pericycle cells.

The protein resides in the vacuole membrane. It catalyses the reaction Cu(+)(in) + ATP + H2O = Cu(+)(out) + ADP + phosphate + H(+). Copper (Cu) transporter that mediates Cu transport in root vacuoles. Involved in Cu detoxification by sequestrating Cu into root vacuoles and limiting translocation of Cu from the roots to the shoots, and accumulation in grains. The protein is Copper-transporting ATPase HMA4 of Oryza sativa subsp. japonica (Rice).